Here is a 191-residue protein sequence, read N- to C-terminus: UPF0149 protein VCM66_2399 (191 aa).

Belongs to the UPF0149 family.

The protein is UPF0149 protein VCM66_2399 of Vibrio cholerae serotype O1 (strain M66-2).